Consider the following 186-residue polypeptide: Quinone reductase (186 aa).

Residues 13–20, 80–83, and S116 contribute to the FMN site; these read SLRKESYN and EYNR.

It belongs to the SsuE family. In terms of assembly, homotetramer. Dimer of dimers. The tetrameric configuration has a central role in chromate reductase activity. It depends on FMN as a cofactor.

It catalyses the reaction a quinone + NADH + H(+) = a quinol + NAD(+). The catalysed reaction is a quinone + NADPH + H(+) = a quinol + NADP(+). The enzyme catalyses Cr(6+) + 2 NADH + O2 = Cr(3+) + superoxide + 2 NAD(+) + 2 H(+). It carries out the reaction Cr(6+) + 2 NADPH + O2 = Cr(3+) + superoxide + 2 NADP(+) + 2 H(+). With respect to regulation, may be inhibited by divalent cations. Catalyzes the reduction of quinones. Acts by simultaneous two-electron transfer, avoiding formation of highly reactive semiquinone intermediates and producing quinols that promote tolerance of H(2)O(2). Quinone reduction is probably the primary biological role of ChrR. Can also reduce toxic chromate to insoluble and less toxic Cr(3+). Catalyzes the transfer of three electrons to Cr(6+) producing Cr(3+) and one electron to molecular oxygen. This reaction produces transiently a minimal amount of the toxic Cr(5+) species and reactive oxygen species (ROS). Chromate reduction protects the cell against chromate toxicity, but is likely a secondary activity. Can also reduce potassium ferricyanide and 2,6-dichloroindophenol. During chromate reduction, displays an eightfold preference for NADH over NADPH. This Pseudomonas putida (strain ATCC 47054 / DSM 6125 / CFBP 8728 / NCIMB 11950 / KT2440) protein is Quinone reductase.